Here is a 206-residue protein sequence, read N- to C-terminus: Urease accessory protein UreG (206 aa).

14–21 (GPVGSGKT) lines the GTP pocket.

It belongs to the SIMIBI class G3E GTPase family. UreG subfamily. In terms of assembly, homodimer. UreD, UreF and UreG form a complex that acts as a GTP-hydrolysis-dependent molecular chaperone, activating the urease apoprotein by helping to assemble the nickel containing metallocenter of UreC. The UreE protein probably delivers the nickel.

It localises to the cytoplasm. Functionally, facilitates the functional incorporation of the urease nickel metallocenter. This process requires GTP hydrolysis, probably effectuated by UreG. This chain is Urease accessory protein UreG, found in Brucella anthropi (strain ATCC 49188 / DSM 6882 / CCUG 24695 / JCM 21032 / LMG 3331 / NBRC 15819 / NCTC 12168 / Alc 37) (Ochrobactrum anthropi).